Reading from the N-terminus, the 497-residue chain is MTLSKYSKPTLNDPNLFRESGYIDGKWVKGTDEVFEVVDPASGEIIARVPEQPVSVVEEAIDVAYETFKTYKNTTPRERAKWLRNMYNLMLENLDDLATIITLENGKALGEAKGEIKYAASYFEWYAEEAPRLYGATIQPLNPHNRVFTIRQPVGVCGIICPWNFPSAMITRKAAAALAVGCTVVIKPDSQTPLSALAMAYLAEKAGFPKGSFNVILSHANTPKLGKTLCESPKVKKVTFTGSTNVGKILMKQSSSTLKKLSFELGGNAPFIVFEDADLDQALEQAMACKFRGLGQTCVCANRLYVHSSIIDKFAKLLAERVKKFVIGHGLDPKTTHGCVINSSAIEKVERHKQDAIDKGAKVVLEGGRLTELGPNFYAPVILSHVPSTAIVSKEETFGPLCPIFSFDTMEEVVGYANDTEFGLAAYVFSKNVNTLYTVSEALETGMVSCNTGVFSDCSIPFGGVKESGFGREGSLYGIEDYTVLKTITIGNLPNSI.

The active-site Proton acceptor is the Glu264. Cys298 serves as the catalytic Nucleophile.

It belongs to the aldehyde dehydrogenase family. As to quaternary structure, homotetramer.

The protein localises to the cytoplasm. The enzyme catalyses succinate semialdehyde + NAD(+) + H2O = succinate + NADH + 2 H(+). The catalysed reaction is succinate semialdehyde + NADP(+) + H2O = succinate + NADPH + 2 H(+). It participates in amino-acid degradation; 4-aminobutanoate degradation. With respect to regulation, inhibited by AMP, ADP anf ATP. Its function is as follows. Catalyzes the oxidation of succinate semialdehyde to succinate. Can utilize both NAD(+) or NADP(+) as a coenzyme, but has a 2.5-fold lower activity with NADP(+) than with NAD(+). Functions in a gamma-aminobutyrate (GABA) degradation pathway that allows growth utilizing GABA as a nitrogen source. Functions in the GABA shunt, which allows to bypass 2 reactions in the TCA cycle by removing alpha-ketoglutarate from the cycle and feeding succinate and NADH back into the cycle. The protein is Succinate-semialdehyde dehydrogenase [NADP(+)] of Saccharomyces cerevisiae (strain ATCC 204508 / S288c) (Baker's yeast).